The primary structure comprises 264 residues: DNA repair protein RecO (264 aa).

The protein belongs to the RecO family.

Its function is as follows. Involved in DNA repair and RecF pathway recombination. This Leuconostoc citreum (strain KM20) protein is DNA repair protein RecO.